The chain runs to 790 residues: Lon protease (790 aa).

The 197-residue stretch at 13-209 folds into the Lon N-terminal domain; sequence LPLFPIRNTV…RLTDHVAKEI (197 aa). 362-369 serves as a coordination point for ATP; it reads GPPGVGKT. In terms of domain architecture, Lon proteolytic spans 598 to 779; the sequence is DNQVGITIGL…DQVLDIALAT (182 aa). Catalysis depends on residues S685 and K728.

It belongs to the peptidase S16 family. As to quaternary structure, homohexamer. Organized in a ring with a central cavity.

Its subcellular location is the cytoplasm. The enzyme catalyses Hydrolysis of proteins in presence of ATP.. Its function is as follows. ATP-dependent serine protease that mediates the selective degradation of mutant and abnormal proteins as well as certain short-lived regulatory proteins. Required for cellular homeostasis and for survival from DNA damage and developmental changes induced by stress. Degrades polypeptides processively to yield small peptide fragments that are 5 to 10 amino acids long. Binds to DNA in a double-stranded, site-specific manner. In Orientia tsutsugamushi (strain Ikeda) (Rickettsia tsutsugamushi), this protein is Lon protease.